We begin with the raw amino-acid sequence, 427 residues long: Trigger factor (427 aa).

A PPIase FKBP-type domain is found at 163–248 (GDTVVIDFVG…IHEVKAKEVP (86 aa)).

The protein belongs to the FKBP-type PPIase family. Tig subfamily.

It localises to the cytoplasm. It catalyses the reaction [protein]-peptidylproline (omega=180) = [protein]-peptidylproline (omega=0). In terms of biological role, involved in protein export. Acts as a chaperone by maintaining the newly synthesized protein in an open conformation. Functions as a peptidyl-prolyl cis-trans isomerase. This Streptococcus suis (strain 98HAH33) protein is Trigger factor.